A 538-amino-acid polypeptide reads, in one-letter code: Putative cysteine ligase BshC (538 aa).

Residues 460 to 485 adopt a coiled-coil conformation; it reads KINEQIELLERMLKRNIEKKHEVELN.

It belongs to the BshC family.

Functionally, involved in bacillithiol (BSH) biosynthesis. May catalyze the last step of the pathway, the addition of cysteine to glucosamine malate (GlcN-Mal) to generate BSH. The sequence is that of Putative cysteine ligase BshC from Bacillus cereus (strain Q1).